Consider the following 772-residue polypeptide: MLRTIILKAGSNASIPSLSRQNKLLRFFATAGAVSRTSPGSIKKIFDDNSYWRNINGQDANNSKISQYLFKKNKTGLFKNPYLTSPDGLRKFSQVSLQQAQELLDKMRNDFSESGKLTYIMNLDRLSDTLCRVIDLCEFIRSTHPDDAFVRAAQDCHEQMFEFMNVLNTDVSLCNMLKSVLNNPEVSSKLSAEELKVGKILLDDFEKSGIYMNPDVREKFIQLSQEISLVGQEFINHTDYPGSNSVKIPCKDLDNSKVSTFLLKQLNKDVKGQNYKVPTFGYAAYALLKSCENEMVRKKLWTALHSCSDKQVKRLSHLIKLRAILANLMHKTSYAEYQLEGKMAKNPKDVQDFILTLMNNTIEKTANELKFIAELKAKDLKKPLTTNTDEILKLVRPWDRDYYTGKYFQLNPSNSPSAKEISYYFTLGNVIQGLSDLFQQIYGIRLEPAITDEGETWSPDVRRLNVISEEEGIIGIIYCDLFERNGKTSNPAHFTVCCSRQIYPSETDFSTIQVGENPDGTYFQLPVISLVCNFSPILIASKKSLCFLQLSEVETLFHEMGHAMHSMLGRTHMQNISGTRCATDFVELPSILMEHFAKDIRILTKIGKHYGTGETIQADMLQRFMKSTNFLQNCETYSQAKMAMLDQSFHDEKIISDIDNFDVVENYQALERRLKVLVDDQSNWCGRFGHLFGYGATYYSYLFDRTIASKIWYALFEDDPYSRKNGDKFKKHLLKWGGLKDPWKCIADVLECPMLEKGGSDAMEFIAQSHKS.

The N-terminal 37 residues, 1 to 37, are a transit peptide targeting the mitochondrion; it reads MLRTIILKAGSNASIPSLSRQNKLLRFFATAGAVSRT. Histidine 558 is a Zn(2+) binding site. The active site involves glutamate 559. Zn(2+)-binding residues include histidine 562 and histidine 565.

The protein belongs to the peptidase M3 family. Zn(2+) serves as cofactor.

Its subcellular location is the mitochondrion matrix. The enzyme catalyses Release of an N-terminal octapeptide as second stage of processing of some proteins imported into the mitochondrion.. Stimulated by Fe(2+). Functionally, cleaves proteins, imported into the mitochondrion, to their mature size. While most mitochondrial precursor proteins are processed to the mature form in one step by mitochondrial processing peptidase (MPP), the sequential cleavage by MIP of an octapeptide after initial processing by MPP is a required step for a subgroup of nuclear-encoded precursor proteins destined for the matrix or the inner membrane. Cleaves precursor proteins of respiratory components, including subunits of the electron transport chain and tricarboxylic acid cycle enzymes, and components of the mitochondrial genetic machinery, including ribosomal proteins, translation factors, and proteins required for mitochondrial DNA metabolism. The sequence is that of Mitochondrial intermediate peptidase (OCT1) from Saccharomyces cerevisiae (strain YJM789) (Baker's yeast).